The chain runs to 224 residues: Response regulator protein GraR (224 aa).

The 114-residue stretch at Gln-2–Tyr-115 folds into the Response regulatory domain. Asp-51 carries the 4-aspartylphosphate modification. A DNA-binding region (ompR/PhoB-type) is located at residues Lys-126–Glu-224.

In terms of processing, phosphorylated by GraS.

Its subcellular location is the cytoplasm. Its function is as follows. Member of the two-component regulatory system GraR/GraS involved in resistance against cationic antimicrobial peptides (CAMPs). The protein is Response regulator protein GraR (graR) of Staphylococcus haemolyticus (strain JCSC1435).